A 274-amino-acid polypeptide reads, in one-letter code: MKKCDLDYTQSICDALNTLRQQKPLVVNITNYVVMNNTANALLAIGASPIMAHSQEEMAEMMSFAGSLVINIGTLDSVWIPRMIYAVEQANANNKPVILDPVGCGASALRTNTARQIVALAEQLTIRGNASEIIALAGEQAQSKGVDALDSSDKAIHAAHHLATQNNCSVVISGATDYIVTTTATIALNNGHEMMPYVTGMGCSHTALTGAFAAIGEPTGLAATAVLGIAGEIAARDAAGPGSLQVNLLDTLYHLDEAVLREYIRINLVEEGCH.

Met-51 serves as a coordination point for substrate. The ATP site is built by Arg-127 and Ser-173. Gly-200 is a substrate binding site.

This sequence belongs to the Thz kinase family. Mg(2+) serves as cofactor.

It carries out the reaction 5-(2-hydroxyethyl)-4-methylthiazole + ATP = 4-methyl-5-(2-phosphooxyethyl)-thiazole + ADP + H(+). It participates in cofactor biosynthesis; thiamine diphosphate biosynthesis; 4-methyl-5-(2-phosphoethyl)-thiazole from 5-(2-hydroxyethyl)-4-methylthiazole: step 1/1. Its function is as follows. Catalyzes the phosphorylation of the hydroxyl group of 4-methyl-5-beta-hydroxyethylthiazole (THZ). This Photobacterium profundum (strain SS9) protein is Hydroxyethylthiazole kinase.